Reading from the N-terminus, the 139-residue chain is uncharacterized protein (139 aa).

The 125-residue stretch at 9–133 folds into the VOC domain; it reads QAAQIRIARP…DGWRIVFMNS (125 aa).

This is an uncharacterized protein from Bacillus subtilis (strain 168).